The chain runs to 342 residues: Holliday junction branch migration complex subunit RuvB (342 aa).

Residues 4-182 are large ATPase domain (RuvB-L); that stretch reads TDRLLSAGRR…FGIPIRLQFY (179 aa). ATP contacts are provided by L21, R22, G63, K66, T67, T68, R172, Y182, and R219. Residue T67 participates in Mg(2+) binding. The segment at 183-253 is small ATPAse domain (RuvB-S); the sequence is TVEELERVVS…VADQSLNRLE (71 aa). The head domain (RuvB-H) stretch occupies residues 256 to 342; that stretch reads NLGLDAMDRR…EAGQDGLFDV (87 aa). DNA-binding residues include R292, R311, and R316.

Belongs to the RuvB family. In terms of assembly, homohexamer. Forms an RuvA(8)-RuvB(12)-Holliday junction (HJ) complex. HJ DNA is sandwiched between 2 RuvA tetramers; dsDNA enters through RuvA and exits via RuvB. An RuvB hexamer assembles on each DNA strand where it exits the tetramer. Each RuvB hexamer is contacted by two RuvA subunits (via domain III) on 2 adjacent RuvB subunits; this complex drives branch migration. In the full resolvosome a probable DNA-RuvA(4)-RuvB(12)-RuvC(2) complex forms which resolves the HJ.

The protein resides in the cytoplasm. It catalyses the reaction ATP + H2O = ADP + phosphate + H(+). In terms of biological role, the RuvA-RuvB-RuvC complex processes Holliday junction (HJ) DNA during genetic recombination and DNA repair, while the RuvA-RuvB complex plays an important role in the rescue of blocked DNA replication forks via replication fork reversal (RFR). RuvA specifically binds to HJ cruciform DNA, conferring on it an open structure. The RuvB hexamer acts as an ATP-dependent pump, pulling dsDNA into and through the RuvAB complex. RuvB forms 2 homohexamers on either side of HJ DNA bound by 1 or 2 RuvA tetramers; 4 subunits per hexamer contact DNA at a time. Coordinated motions by a converter formed by DNA-disengaged RuvB subunits stimulates ATP hydrolysis and nucleotide exchange. Immobilization of the converter enables RuvB to convert the ATP-contained energy into a lever motion, pulling 2 nucleotides of DNA out of the RuvA tetramer per ATP hydrolyzed, thus driving DNA branch migration. The RuvB motors rotate together with the DNA substrate, which together with the progressing nucleotide cycle form the mechanistic basis for DNA recombination by continuous HJ branch migration. Branch migration allows RuvC to scan DNA until it finds its consensus sequence, where it cleaves and resolves cruciform DNA. In Rhizorhabdus wittichii (strain DSM 6014 / CCUG 31198 / JCM 15750 / NBRC 105917 / EY 4224 / RW1) (Sphingomonas wittichii), this protein is Holliday junction branch migration complex subunit RuvB.